Consider the following 137-residue polypeptide: NADH-ubiquinone oxidoreductase chain 3 (137 aa).

3 helical membrane-spanning segments follow: residues Leu6–Ala26, Phe57–Phe77, and Ile86–Glu106.

Belongs to the complex I subunit 3 family.

The protein localises to the mitochondrion membrane. The enzyme catalyses a ubiquinone + NADH + 5 H(+)(in) = a ubiquinol + NAD(+) + 4 H(+)(out). In terms of biological role, core subunit of the mitochondrial membrane respiratory chain NADH dehydrogenase (Complex I) that is believed to belong to the minimal assembly required for catalysis. Complex I functions in the transfer of electrons from NADH to the respiratory chain. The immediate electron acceptor for the enzyme is believed to be ubiquinone. This chain is NADH-ubiquinone oxidoreductase chain 3 (ND3), found in Podospora anserina (strain S / ATCC MYA-4624 / DSM 980 / FGSC 10383) (Pleurage anserina).